The chain runs to 484 residues: ATP synthase subunit beta (484 aa).

Position 162 to 169 (162 to 169 (GGAGVGKT)) interacts with ATP.

It belongs to the ATPase alpha/beta chains family. F-type ATPases have 2 components, CF(1) - the catalytic core - and CF(0) - the membrane proton channel. CF(1) has five subunits: alpha(3), beta(3), gamma(1), delta(1), epsilon(1). CF(0) has four main subunits: a(1), b(1), b'(1) and c(9-12).

It is found in the cellular thylakoid membrane. The enzyme catalyses ATP + H2O + 4 H(+)(in) = ADP + phosphate + 5 H(+)(out). Produces ATP from ADP in the presence of a proton gradient across the membrane. The catalytic sites are hosted primarily by the beta subunits. This is ATP synthase subunit beta from Synechococcus elongatus (strain ATCC 33912 / PCC 7942 / FACHB-805) (Anacystis nidulans R2).